The primary structure comprises 155 residues: Ribosomal RNA large subunit methyltransferase H (155 aa).

S-adenosyl-L-methionine is bound by residues Leu72, Gly103, and 122-127 (LSDLTL).

It belongs to the RNA methyltransferase RlmH family. Homodimer.

It localises to the cytoplasm. The catalysed reaction is pseudouridine(1915) in 23S rRNA + S-adenosyl-L-methionine = N(3)-methylpseudouridine(1915) in 23S rRNA + S-adenosyl-L-homocysteine + H(+). Functionally, specifically methylates the pseudouridine at position 1915 (m3Psi1915) in 23S rRNA. In Polaromonas naphthalenivorans (strain CJ2), this protein is Ribosomal RNA large subunit methyltransferase H.